The following is a 298-amino-acid chain: Inosose dehydratase (298 aa).

It belongs to the IolE/MocC family. The cofactor is glutathione. Co(2+) is required as a cofactor. Mn(2+) serves as cofactor.

The catalysed reaction is scyllo-inosose = 3D-3,5/4-trihydroxycyclohexane-1,2-dione + H2O. Catalyzes the dehydration of inosose (2-keto-myo-inositol, 2KMI or 2,4,6/3,5-pentahydroxycyclohexanone) to 3D-(3,5/4)-trihydroxycyclohexane-1,2-dione (D-2,3-diketo-4-deoxy-epi-inositol). The sequence is that of Inosose dehydratase from Glaesserella parasuis serovar 5 (strain SH0165) (Haemophilus parasuis).